A 275-amino-acid chain; its full sequence is Stage 0 sporulation protein YaaT (275 aa).

Residues 61–146 (RKVIRVADDR…FKTRIELRQI (86 aa)) enclose the PSP1 C-terminal domain.

It is found in the cytoplasm. Essential for the phosphorelay during initiation of sporulation. May control the level of phosphorylated spo0A through spo0E activity during sporulation. In Bacillus subtilis (strain 168), this protein is Stage 0 sporulation protein YaaT (yaaT).